Here is a 164-residue protein sequence, read N- to C-terminus: Protein HIT1 (164 aa).

Zn(2+) contacts are provided by Cys8, Cys11, Cys28, and Cys32. The HIT-type; degenerate zinc finger occupies 8–49 (CGICRGVDGKYKCPKCGVRYCSLKCYKDAAKHVHKESEQPRA).

This is Protein HIT1 (HIT1) from Saccharomyces cerevisiae (strain ATCC 204508 / S288c) (Baker's yeast).